A 148-amino-acid polypeptide reads, in one-letter code: uncharacterized protein (148 aa).

The next 3 helical transmembrane spans lie at 25 to 45 (FCTV…LLTA), 85 to 105 (IVRF…LLYL), and 118 to 138 (LAAT…WVFG).

The protein belongs to the GtrA family.

Its subcellular location is the cell membrane. This is an uncharacterized protein from Bacillus subtilis (strain 168).